Reading from the N-terminus, the 327-residue chain is uncharacterized protein (327 aa).

A helical transmembrane segment spans residues 12–32; that stretch reads LVVVVVAIAIFTLVLLMLWEG. The disordered stretch occupies residues 149–170; it reads AFSAVETSEGSDQESEGADEQG. Residues 157–167 show a composition bias toward acidic residues; the sequence is EGSDQESEGAD. Positions 162 to 227 form a coiled coil; sequence ESEGADEQGK…LDEENREVAE (66 aa).

The protein localises to the membrane. This is an uncharacterized protein from Encephalitozoon cuniculi (strain GB-M1) (Microsporidian parasite).